Consider the following 209-residue polypeptide: Probable nicotinate-nucleotide adenylyltransferase (209 aa).

This sequence belongs to the NadD family.

It carries out the reaction nicotinate beta-D-ribonucleotide + ATP + H(+) = deamido-NAD(+) + diphosphate. It functions in the pathway cofactor biosynthesis; NAD(+) biosynthesis; deamido-NAD(+) from nicotinate D-ribonucleotide: step 1/1. Catalyzes the reversible adenylation of nicotinate mononucleotide (NaMN) to nicotinic acid adenine dinucleotide (NaAD). The polypeptide is Probable nicotinate-nucleotide adenylyltransferase (Shewanella woodyi (strain ATCC 51908 / MS32)).